The following is a 114-amino-acid chain: Iron-sulfur cluster insertion protein ErpA (114 aa).

Iron-sulfur cluster is bound by residues Cys-42, Cys-106, and Cys-108.

This sequence belongs to the HesB/IscA family. In terms of assembly, homodimer. Iron-sulfur cluster serves as cofactor.

In terms of biological role, required for insertion of 4Fe-4S clusters for at least IspG. The polypeptide is Iron-sulfur cluster insertion protein ErpA (Yersinia enterocolitica serotype O:8 / biotype 1B (strain NCTC 13174 / 8081)).